We begin with the raw amino-acid sequence, 203 residues long: Recombination protein RecR (203 aa).

The segment at 56–71 adopts a C4-type zinc-finger fold; the sequence is CAVCGNVSDDERCRIC. Positions 79–179 constitute a Toprim domain; it reads SVVCVVEEPK…TVTRIASGLP (101 aa).

It belongs to the RecR family.

May play a role in DNA repair. It seems to be involved in an RecBC-independent recombinational process of DNA repair. It may act with RecF and RecO. The sequence is that of Recombination protein RecR from Mycobacterium avium (strain 104).